Reading from the N-terminus, the 688-residue chain is Glycine--tRNA ligase beta subunit (688 aa).

This sequence belongs to the class-II aminoacyl-tRNA synthetase family. In terms of assembly, tetramer of two alpha and two beta subunits.

It is found in the cytoplasm. It carries out the reaction tRNA(Gly) + glycine + ATP = glycyl-tRNA(Gly) + AMP + diphosphate. The chain is Glycine--tRNA ligase beta subunit from Shewanella sp. (strain ANA-3).